Here is a 192-residue protein sequence, read N- to C-terminus: Flagellar transcriptional regulator FlhC (192 aa).

Zn(2+)-binding residues include C137, C140, C157, and C160.

This sequence belongs to the FlhC family. In terms of assembly, heterohexamer composed of two FlhC and four FlhD subunits. Each FlhC binds a FlhD dimer, forming a heterotrimer, and a hexamer assembles by dimerization of two heterotrimers. Zn(2+) serves as cofactor.

Its subcellular location is the cytoplasm. Functions in complex with FlhD as a master transcriptional regulator that regulates transcription of several flagellar and non-flagellar operons by binding to their promoter region. Activates expression of class 2 flagellar genes, including fliA, which is a flagellum-specific sigma factor that turns on the class 3 genes. Also regulates genes whose products function in a variety of physiological pathways. This chain is Flagellar transcriptional regulator FlhC, found in Escherichia coli O6:H1 (strain CFT073 / ATCC 700928 / UPEC).